The primary structure comprises 354 residues: Uroporphyrinogen decarboxylase (354 aa).

Residues 27–31 (RQAGR), F46, D77, Y154, T209, and H327 contribute to the substrate site.

Belongs to the uroporphyrinogen decarboxylase family. As to quaternary structure, homodimer.

Its subcellular location is the cytoplasm. It carries out the reaction uroporphyrinogen III + 4 H(+) = coproporphyrinogen III + 4 CO2. Its pathway is porphyrin-containing compound metabolism; protoporphyrin-IX biosynthesis; coproporphyrinogen-III from 5-aminolevulinate: step 4/4. Catalyzes the decarboxylation of four acetate groups of uroporphyrinogen-III to yield coproporphyrinogen-III. This is Uroporphyrinogen decarboxylase from Pseudomonas putida (strain ATCC 47054 / DSM 6125 / CFBP 8728 / NCIMB 11950 / KT2440).